The following is a 1052-amino-acid chain: Membrane-bound transcription factor site-1 protease (1052 aa).

A signal peptide spans 1-17; the sequence is MKLINIWLLLLVVLLCG. Positions 18-186 are excised as a propeptide; the sequence is KKHLGDRLGK…TGRHSSRRLL (169 aa). N148 carries N-linked (GlcNAc...) asparagine glycosylation. S168 carries the post-translational modification Phosphoserine. At 187–999 the chain is on the lumenal side; sequence RAIPRQVAQT…MPGRYNQEVG (813 aa). One can recognise a Peptidase S8 domain in the interval 190–472; sequence PRQVAQTLQA…HGKLDLLRAY (283 aa). Residue D218 is the Charge relay system of the active site. N236 is a glycosylation site (N-linked (GlcNAc...) asparagine). H249 (charge relay system) is an active-site residue. Residue N305 is glycosylated (N-linked (GlcNAc...) asparagine). S414 (charge relay system) is an active-site residue. N515 and N728 each carry an N-linked (GlcNAc...) asparagine glycan. Polar residues predominate over residues 877 to 887; sequence PSLSHSGNRQR. The disordered stretch occupies residues 877 to 900; that stretch reads PSLSHSGNRQRPPSGAGLAPPERM. N-linked (GlcNAc...) asparagine glycosylation occurs at N939. A helical transmembrane segment spans residues 1000–1022; that stretch reads QTIPVFAFLGAMVALAFFVVQIS. Residues 1023–1052 lie on the Cytoplasmic side of the membrane; it reads KAKSRPKRRRPRAKRPQLTQQTHPPRTPSV. Residues 1025 to 1037 show a composition bias toward basic residues; it reads KSRPKRRRPRAKR. A disordered region spans residues 1025–1052; the sequence is KSRPKRRRPRAKRPQLTQQTHPPRTPSV.

It belongs to the peptidase S8 family. The cofactor is Ca(2+). The 148 kDa zymogen is processed progressively into two membrane-bound 120 and 106 kDa forms in the endoplasmic reticulum, and late into a secreted 98 kDa form. The propeptide is autocatalytically removed through an intramolecular cleavage after Leu-186. Further cleavage generates 14, 10, and 8 kDa intermediates.

The protein localises to the endoplasmic reticulum membrane. It localises to the golgi apparatus membrane. The catalysed reaction is Processes precursors containing basic and hydrophobic/aliphatic residues at P4 and P2, respectively, with a relatively relaxed acceptance of amino acids at P1 and P3.. Its activity is regulated as follows. Inhibited by divalent copper and zinc ions, but not by nickel or cobalt. Inhibited by its prosegment, but not smaller fragments. Inhibited by 4-(2-aminoethyl)benzenesulfonyl fluoride (AEBSF), a serine protease inhibitor. Functionally, serine protease that cleaves after hydrophobic or small residues, provided that Arg or Lys is in position P4: known substrates include SREBF1/SREBP1, SREBF2/SREBP2, BDNF, GNPTAB, ATF6, ATF6B and FAM20C. Cleaves substrates after Arg-Ser-Val-Leu (SREBP2), Arg-His-Leu-Leu (ATF6), Arg-Gly-Leu-Thr (BDNF) and its own propeptide after Arg-Arg-Leu-Leu. Catalyzes the first step in the proteolytic activation of the sterol regulatory element-binding proteins (SREBPs) SREBF1/SREBP1 and SREBF2/SREBP2. Also mediates the first step in the proteolytic activation of the cyclic AMP-dependent transcription factor ATF-6 (ATF6 and ATF6B). Mediates the protein cleavage of GNPTAB into subunit alpha and beta, thereby participating in biogenesis of lysosomes. Cleaves the propeptide from FAM20C which is required for FAM20C secretion from the Golgi apparatus membrane and for enhancement of FAM20C kinase activity, promoting osteoblast differentiation and biomineralization. Involved in the regulation of M6P-dependent Golgi-to-lysosome trafficking of lysosomal enzymes. It is required for the activation of CREB3L2/BBF2H7, a transcriptional activator of MIA3/TANGO and other genes controlling mega vesicle formation. Therefore, it plays a key role in the regulation of mega vesicle-mediated collagen trafficking. In astrocytes and osteoblasts, upon DNA damage and ER stress, mediates the first step of the regulated intramembrane proteolytic activation of the transcription factor CREB3L1, leading to the inhibition of cell-cycle progression. This chain is Membrane-bound transcription factor site-1 protease, found in Cricetulus griseus (Chinese hamster).